We begin with the raw amino-acid sequence, 356 residues long: Protein-L-isoaspartate O-methyltransferase domain-containing protein 1 (356 aa).

A lipid anchor (N-myristoyl glycine) is attached at glycine 2. Residue serine 64 is part of the active site. AdoMet binding motif stretches follow at residues 85-94 (LNLGSGTGYL), 160-164 (YDRIY), and 181-191 (LKVGGILVMPI). Positions 240 to 250 (VRNLQDLARIY) are BC-box. Positions 299 to 331 (PLDSEEDEKMEEDKEEEEKEPGEALKPEEPPQN) are disordered. The span at 301–318 (DSEEDEKMEEDKEEEEKE) shows a compositional bias: acidic residues. Residues 319 to 331 (PGEALKPEEPPQN) show a composition bias toward basic and acidic residues. A CUL-box region spans residues 340-343 (LPLP).

This sequence belongs to the methyltransferase superfamily. L-isoaspartyl/D-aspartyl protein methyltransferase family. As to quaternary structure, component of the probable ECS(PCMTD1) E3 ubiquitin-protein ligase complex, at least composed of CUL5, ELOB, ELOC, RBX2 and PCMTD1. Interacts (via the BC-box) with ELOB and ELOC; the interaction is direct and stabilizes PCMTD1.

The protein resides in the cytoplasm. It is found in the membrane. In terms of biological role, substrate recognition component of an ECS (Elongin BC-CUL5-SOCS-box protein) E3 ubiquitin ligase complex which mediates the ubiquitination and subsequent proteasomal degradation of target proteins. Specifically binds to the methyltransferase cofactor S-adenosylmethionine (AdoMet) via the N-terminal AdoMet binding motif, but does not display methyltransferase activity. May provide an alternate maintenance pathway for modified proteins by acting as a damage-specific E3 ubiquitin ligase adaptor protein. This Bos taurus (Bovine) protein is Protein-L-isoaspartate O-methyltransferase domain-containing protein 1 (PCMTD1).